The following is a 275-amino-acid chain: NH(3)-dependent NAD(+) synthetase (275 aa).

50–57 (GISGGVDS) contacts ATP. Position 56 (Asp56) interacts with Mg(2+). Arg147 serves as a coordination point for deamido-NAD(+). Thr167 is a binding site for ATP. Residue Glu172 participates in Mg(2+) binding. Deamido-NAD(+) contacts are provided by Lys180 and Asp187. Lys196 and Thr218 together coordinate ATP. 267 to 268 (HK) is a binding site for deamido-NAD(+).

Belongs to the NAD synthetase family. In terms of assembly, homodimer.

It carries out the reaction deamido-NAD(+) + NH4(+) + ATP = AMP + diphosphate + NAD(+) + H(+). Its pathway is cofactor biosynthesis; NAD(+) biosynthesis; NAD(+) from deamido-NAD(+) (ammonia route): step 1/1. Functionally, catalyzes the ATP-dependent amidation of deamido-NAD to form NAD. Uses ammonia as a nitrogen source. The sequence is that of NH(3)-dependent NAD(+) synthetase from Pseudomonas fluorescens (strain Pf0-1).